Here is an 859-residue protein sequence, read N- to C-terminus: MQEQYNPSEIEALVQKHWHDNKTFEVTEDANKEKFYCLSMFPYPSGRLHMGHVRNYTIGDVVARFQRLQGKNVLQPIGWDSFGLPAENAAINNKTAPAPWTYENIEYMKNQLKLLGFGYDWSREIATCTPEYYRWEQWFFTKLYEKGLVYKKTASVNWCPNDETVLANEQVQDGCCWRCDTPVEQKEIPQWFIKITAYAEELLNDIDTLDGWPEQVKTMQRNWIGRSEGVEMTFGVAGHDKTFDIYTTRPDTLMGVTYVAIAAGHPLAEIAAQTNPELAAFIDECKNSTTSEAELATMEKRGVATGLFAIHPITGKQVPIWAANFVLMNYGTGAVMSVPGHDQRDFEFAKKYGLAIEAVIKPVDGEVDISEAAYTEKGILFNSGEFDGLDFDAAFNAIANKLVAEGKGKRQVNYRLRDWGVSRQRYWGAPIPMVTLADGTVIPTPEDQLPVLLPEDVVMDGIQSPIKADKEWAKTQVNGQDALRETDTFDTFMESSWYYARYCSPQADEMLDPAKANYWLPVDQYIGGIEHACMHLLYFRFFHKLLRDAGLVNSNEPAKQLLTQGMVLADAFYYINEKGARVWVSPLDVATTEKDDKGRITKAIDKDGNELVYTGMCKMSKSKNNGIDPQVMVEKYGADTVRLFMMFASPPELTLEWQESGVEGAHRFIKRLWKLASEYIAQDNSEALDVSKLTSEQKALRREVHKTIAKVTDDIGRRQMFNTAVAAVMELMNHLQKAPQTTGQDRAIIGEALSAVVRLLYPIIPHVSFTLWNDLGNTGSIEDSQWPVVDESALVEDSKLIVVQVNGKVRAKITVAADADKDSVEALGMNDEHVIKYLDGLTVRKVIYVPGKLLSIVAN.

A 'HIGH' region motif is present at residues 42–52 (PYPSGRLHMGH). Residues 618–622 (KMSKS) carry the 'KMSKS' region motif. Lys-621 provides a ligand contact to ATP.

Belongs to the class-I aminoacyl-tRNA synthetase family.

The protein localises to the cytoplasm. The catalysed reaction is tRNA(Leu) + L-leucine + ATP = L-leucyl-tRNA(Leu) + AMP + diphosphate. The chain is Leucine--tRNA ligase from Shewanella sp. (strain W3-18-1).